Reading from the N-terminus, the 275-residue chain is Large ribosomal subunit protein uL2 (275 aa).

Disordered regions lie at residues 36 to 55 (GLTG…RRMG) and 224 to 263 (VVMN…RQNK).

It belongs to the universal ribosomal protein uL2 family. As to quaternary structure, part of the 50S ribosomal subunit. Forms a bridge to the 30S subunit in the 70S ribosome.

In terms of biological role, one of the primary rRNA binding proteins. Required for association of the 30S and 50S subunits to form the 70S ribosome, for tRNA binding and peptide bond formation. It has been suggested to have peptidyltransferase activity; this is somewhat controversial. Makes several contacts with the 16S rRNA in the 70S ribosome. The chain is Large ribosomal subunit protein uL2 from Rhodospirillum centenum (strain ATCC 51521 / SW).